A 315-amino-acid polypeptide reads, in one-letter code: Ribosomal RNA small subunit methyltransferase H (315 aa).

Residues Gly-37–His-39, Asp-57, Leu-91, Asp-105, and Gln-112 contribute to the S-adenosyl-L-methionine site.

This sequence belongs to the methyltransferase superfamily. RsmH family.

It localises to the cytoplasm. The catalysed reaction is cytidine(1402) in 16S rRNA + S-adenosyl-L-methionine = N(4)-methylcytidine(1402) in 16S rRNA + S-adenosyl-L-homocysteine + H(+). Specifically methylates the N4 position of cytidine in position 1402 (C1402) of 16S rRNA. The polypeptide is Ribosomal RNA small subunit methyltransferase H (Syntrophus aciditrophicus (strain SB)).